We begin with the raw amino-acid sequence, 680 residues long: MIDRYKHQQLRIGSVSPQQISAWATKIIPNGEIVGEVTKPYTFHYKTNKPEKDGLFCERIFGPIKSGICACGNYRVIGDEKEDPKFCEQCGVEFVGSRIRRYQMGYIKLTCPVTHVWYLKRLPSYIANLLDKPLKELEGLVYCDFSFARPITKKPTFLRLRGSFEYEIQSWKYSIPLFFTTQGFDIFRNREISTGAGAIREQLADLDLRIIIENSLVEWKQLGEEGPTGNEWEDRKIVRRKDFLVRRMELAKHFIRTNIEPEWMVLCLLPVLPPELRPIIQIEGGKLMSSDINELYRRVIYRNNTLTDLLTTSRSTPGELVMCQEKLVQEAVDTLLDNGIRGQPMRDGHNKVYKSFSDVIEGKEGRFRETLLGKRVDYSGRSVIVVGPSLSLHRCGLPREIAIELFQTFVIRGLIRQHLASNIGVAKSQIRENKPIVWEILQEVMQGHPVLLNRAPTLHRLGIQSFQPILVEGRTICLHPLVCKGFNADFDGDQMAVHVPLSLEAQAEARLLMFSHMNLLSPAIGDPISVPTQDMLIGLYVLTSGTRRGICANRYNPCNRKNYQNERIYETNYKYMKEPFFCNSYDAIGAYRQKRINLDSPLWLRWQLDQRVSASREVPIEVHYESFGTYHEIYAHYLIVRSIKKETFCVYIRTTVGHISFYREIEEAIQGFSQACSYDT.

Positions 69, 71, 87, and 90 each coordinate Zn(2+). Residues D489, D491, and D493 each contribute to the Mg(2+) site.

Belongs to the RNA polymerase beta' chain family. RpoC1 subfamily. As to quaternary structure, in plastids the minimal PEP RNA polymerase catalytic core is composed of four subunits: alpha, beta, beta', and beta''. When a (nuclear-encoded) sigma factor is associated with the core the holoenzyme is formed, which can initiate transcription. Mg(2+) serves as cofactor. It depends on Zn(2+) as a cofactor.

Its subcellular location is the plastid. It localises to the chloroplast. The enzyme catalyses RNA(n) + a ribonucleoside 5'-triphosphate = RNA(n+1) + diphosphate. DNA-dependent RNA polymerase catalyzes the transcription of DNA into RNA using the four ribonucleoside triphosphates as substrates. This is DNA-directed RNA polymerase subunit beta' from Aethionema cordifolium (Lebanon stonecress).